Reading from the N-terminus, the 193-residue chain is Bcl-2-binding component 3, isoforms 1/2 (193 aa).

Disordered stretches follow at residues 1–28 (MARA…FPLG) and 71–138 (ALGG…REIG). Ser-10 bears the Phosphoserine mark. The span at 71 to 82 (ALGGSRWPGGPR) shows a compositional bias: low complexity. The short motif at 137-151 (IGAQLRRMADDLNAQ) is the BH3 element.

This sequence belongs to the Bcl-2 family. Interacts with MCL1 and BCL2A1. Interacts (via BH3 domain) with BCL2. Interacts with BCL2L1/BCL-XL. Interacts (via BH3 domain) with NOL3/ARC (via CARD domain); this interaction prevents BBC3 association with BCL2 and results in CASP8 activation. As to expression, ubiquitously expressed.

The protein localises to the mitochondrion. In terms of biological role, essential mediator of p53/TP53-dependent and p53/TP53-independent apoptosis. Promotes partial unfolding of BCL2L1 and dissociation of BCL2L1 from p53/TP53, releasing the bound p53/TP53 to induce apoptosis. Regulates ER stress-induced neuronal apoptosis. This Homo sapiens (Human) protein is Bcl-2-binding component 3, isoforms 1/2 (BBC3).